Here is a 340-residue protein sequence, read N- to C-terminus: Integral membrane protein SED5 (340 aa).

Residues M1–R319 lie on the Cytoplasmic side of the membrane. Residues R31–V51 form a disordered region. Over residues N39–V51 the composition is skewed to polar residues. Residues L146–D173 adopt a coiled-coil conformation. Positions T180 to F231 are disordered. Residues D189 to M209 are compositionally biased toward polar residues. The t-SNARE coiled-coil homology domain occupies N249–Y311. Residues W320–N340 traverse the membrane as a helical; Anchor for type IV membrane protein segment.

The protein belongs to the syntaxin family. In terms of assembly, interacts with SLY1, STF1, SFB3 and GOS1.

The protein resides in the membrane. Its subcellular location is the golgi apparatus membrane. Functionally, required for vesicular transport between the endoplasmic reticulum and the Golgi complex. Acts as a target organelle soluble NSF attachment protein receptor (t-SNARE). The sequence is that of Integral membrane protein SED5 (SED5) from Saccharomyces cerevisiae (strain ATCC 204508 / S288c) (Baker's yeast).